Consider the following 185-residue polypeptide: Protein GrpE (185 aa).

Residues 1–37 (MEEQEEKQYNQNIQDNEEGTQMREELQESTSAQQTLQ) are disordered. Residues 28-37 (ESTSAQQTLQ) are compositionally biased toward polar residues.

Belongs to the GrpE family. In terms of assembly, homodimer.

Its subcellular location is the cytoplasm. Participates actively in the response to hyperosmotic and heat shock by preventing the aggregation of stress-denatured proteins, in association with DnaK and GrpE. It is the nucleotide exchange factor for DnaK and may function as a thermosensor. Unfolded proteins bind initially to DnaJ; upon interaction with the DnaJ-bound protein, DnaK hydrolyzes its bound ATP, resulting in the formation of a stable complex. GrpE releases ADP from DnaK; ATP binding to DnaK triggers the release of the substrate protein, thus completing the reaction cycle. Several rounds of ATP-dependent interactions between DnaJ, DnaK and GrpE are required for fully efficient folding. This chain is Protein GrpE, found in Helicobacter hepaticus (strain ATCC 51449 / 3B1).